An 846-amino-acid polypeptide reads, in one-letter code: Protein IRS1 (846 aa).

Disordered stretches follow at residues methionine 1–histidine 82, threonine 366–alanine 385, tryptophan 606–proline 626, and glutamine 714–histidine 846. The segment covering arginine 16 to glycine 25 has biased composition (gly residues). Positions valine 26–glycine 56 are enriched in low complexity. Over residues glutamate 722 to tyrosine 732 the composition is skewed to acidic residues. Residues arginine 832–histidine 846 are compositionally biased toward basic residues.

Belongs to the herpesviridae US22 family. As to quaternary structure, interacts (via N-terminus) with the viral DNA polymerase accessory subunit UL44. Interacts (via C-terminus) with host EIF2AK2/PKR.

It is found in the virion. It localises to the host cytoplasm. The protein localises to the host nucleus. In terms of biological role, inhibits the establishment of the antiviral state in the infected cell. Prevents the phosphorylation of the host eukaryotic translation initiation factor eIF-2alpha and thus the shutoff of viral and cellular protein synthesis by directly interacting with EIF2AK2/PKR. May also participate in viral DNA replication by interacting with the DNA polymerase accessory protein and the lytic origin of replication, oriLyt. This is Protein IRS1 (IRS1) from Homo sapiens (Human).